The chain runs to 843 residues: Respiratory burst oxidase homolog protein B (843 aa).

Residues 1 to 10 are compositionally biased toward acidic residues; sequence MREEEMESSS. The interval 1-27 is disordered; sequence MREEEMESSSEGETNKISRCKATGSDN. Residues 1–297 lie on the Cytoplasmic side of the membrane; it reads MREEEMESSS…SYFFLENWKR (297 aa). EF-hand-like stretches follow at residues 114–122 and 148–159; these read AVEGKLPKS and RGTTSSSITKTE. 2 EF-hand domains span residues 171 to 206 and 215 to 250; these read SFDDRLQIFFDMVDKNLDGRITGDEVKEIIALSASA and NVDEYAALIMEELDRDNLGYIELHNLETLLLQVPSQ. Ca(2+)-binding residues include D184, N186, D188, R190, and E195. Residue S268 is modified to Phosphoserine. Residues 298–318 form a helical membrane-spanning segment; the sequence is IWVLTLWISICITLFTWKFLQ. The Extracellular portion of the chain corresponds to 319 to 383; sequence YKRKTVFEVM…FDDNINFHKV (65 aa). A Ferric oxidoreductase domain is found at 336–495; that stretch reads KGSAETLKFN…LFVIVYVLLI (160 aa). A helical transmembrane segment spans residues 384-404; the sequence is VAFGIAVGIGLHAISHLACDF. The Cytoplasmic portion of the chain corresponds to 405 to 439; that stretch reads PRLLHAKNVEFEPMKKFFGDERPENYGWFMKGTDG. The chain crosses the membrane as a helical span at residues 440 to 460; that stretch reads WTGVTMVVLMLVAYVLAQSWF. Topologically, residues 461–482 are extracellular; it reads RRNRANLPKSLKRLTGFNAFWY. The chain crosses the membrane as a helical span at residues 483–503; sequence SHHLFVIVYVLLIVHGYFVYL. Topologically, residues 504-511 are cytoplasmic; it reads SKEWYHKT. Residues 512-529 traverse the membrane as a helical segment; that stretch reads TWMYLAVPVLLYAFERLI. Topologically, residues 530-659 are extracellular; the sequence is RAFRPGAKAV…PYGAPAQDYR (130 aa). The FAD-binding FR-type domain occupies 534–657; it reads PGAKAVKVLK…DGPYGAPAQD (124 aa). A helical membrane pass occupies residues 660–680; sequence NYDVLLLVGLGIGATPLISII. At 681–843 the chain is on the cytoplasmic side; sequence RDVLNNIKNQ…TKFEFHKENF (163 aa).

This sequence belongs to the RBOH (TC 5.B.1.3) family. Monomer and homodimer.

It is found in the membrane. Functionally, calcium-dependent NADPH oxidase that generates superoxide. This chain is Respiratory burst oxidase homolog protein B (RBOHB), found in Arabidopsis thaliana (Mouse-ear cress).